A 267-amino-acid chain; its full sequence is Phosphatidylglycerol--prolipoprotein diacylglyceryl transferase (267 aa).

4 consecutive transmembrane segments (helical) span residues 20–40, 57–77, 88–108, and 117–137; these read LEIRWYAICILLGLILGVYLA, FILIAFPLSILGARIYYVAFS, IFAIWNGGIAIYGGLITGAIV, and FINTLDFLDIVAPSVMIAQAI. R139 lines the a 1,2-diacyl-sn-glycero-3-phospho-(1'-sn-glycerol) pocket. Transmembrane regions (helical) follow at residues 175 to 195, 205 to 225, and 235 to 255; these read QPTFLFESLWNLLGFGLVCVL, GEITAFYLVWYGCGRLLIEGL, and IRVSQWLSGVLILVGIIMVVL.

The protein belongs to the Lgt family.

It localises to the cell membrane. It catalyses the reaction L-cysteinyl-[prolipoprotein] + a 1,2-diacyl-sn-glycero-3-phospho-(1'-sn-glycerol) = an S-1,2-diacyl-sn-glyceryl-L-cysteinyl-[prolipoprotein] + sn-glycerol 1-phosphate + H(+). It functions in the pathway protein modification; lipoprotein biosynthesis (diacylglyceryl transfer). In terms of biological role, catalyzes the transfer of the diacylglyceryl group from phosphatidylglycerol to the sulfhydryl group of the N-terminal cysteine of a prolipoprotein, the first step in the formation of mature lipoproteins. The polypeptide is Phosphatidylglycerol--prolipoprotein diacylglyceryl transferase (Streptococcus suis (strain 98HAH33)).